A 171-amino-acid chain; its full sequence is Peptide methionine sulfoxide reductase MsrA (171 aa).

The active site involves Cys-13.

The protein belongs to the MsrA Met sulfoxide reductase family.

The catalysed reaction is L-methionyl-[protein] + [thioredoxin]-disulfide + H2O = L-methionyl-(S)-S-oxide-[protein] + [thioredoxin]-dithiol. It catalyses the reaction [thioredoxin]-disulfide + L-methionine + H2O = L-methionine (S)-S-oxide + [thioredoxin]-dithiol. Its function is as follows. Has an important function as a repair enzyme for proteins that have been inactivated by oxidation. Catalyzes the reversible oxidation-reduction of methionine sulfoxide in proteins to methionine. The polypeptide is Peptide methionine sulfoxide reductase MsrA (Mycobacterium ulcerans (strain Agy99)).